A 216-amino-acid polypeptide reads, in one-letter code: Oligoribonuclease (216 aa).

The Exonuclease domain maps to 6 to 171 (VVWMDCEMTG…ADIKESIREL (166 aa)). Tyr128 is an active-site residue.

The protein belongs to the oligoribonuclease family.

The protein resides in the cytoplasm. Functionally, 3'-to-5' exoribonuclease specific for small oligoribonucleotides. The chain is Oligoribonuclease from Nocardia farcinica (strain IFM 10152).